The chain runs to 111 residues: Cytochrome c (111 aa).

Alanine 1 is subject to N-acetylalanine. Heme c is bound by residues cysteine 22, cysteine 25, and histidine 26. Lysine 80 is subject to N6,N6,N6-trimethyllysine. Methionine 88 is a binding site for heme c. N6,N6,N6-trimethyllysine is present on lysine 94.

It belongs to the cytochrome c family. Post-translationally, binds 1 heme c group covalently per subunit.

It localises to the mitochondrion intermembrane space. In terms of biological role, electron carrier protein. The oxidized form of the cytochrome c heme group can accept an electron from the heme group of the cytochrome c1 subunit of cytochrome reductase. Cytochrome c then transfers this electron to the cytochrome oxidase complex, the final protein carrier in the mitochondrial electron-transport chain. The chain is Cytochrome c from Guizotia abyssinica (Niger).